Reading from the N-terminus, the 105-residue chain is Small ribosomal subunit protein uS10 (105 aa).

The protein belongs to the universal ribosomal protein uS10 family. As to quaternary structure, part of the 30S ribosomal subunit.

Its function is as follows. Involved in the binding of tRNA to the ribosomes. The sequence is that of Small ribosomal subunit protein uS10 from Synechococcus sp. (strain JA-3-3Ab) (Cyanobacteria bacterium Yellowstone A-Prime).